A 92-amino-acid polypeptide reads, in one-letter code: Elongation factor 1-beta (92 aa).

The protein belongs to the EF-1-beta/EF-1-delta family.

Functionally, promotes the exchange of GDP for GTP in EF-1-alpha/GDP, thus allowing the regeneration of EF-1-alpha/GTP that could then be used to form the ternary complex EF-1-alpha/GTP/AAtRNA. The polypeptide is Elongation factor 1-beta (Pyrobaculum neutrophilum (strain DSM 2338 / JCM 9278 / NBRC 100436 / V24Sta) (Thermoproteus neutrophilus)).